The sequence spans 335 residues: tRNA N6-adenosine threonylcarbamoyltransferase (335 aa).

The Fe cation site is built by His111, His115, and Tyr132. Substrate-binding positions include Tyr132–Gly136, Asp164, Gly177, Glu181, and Asn260. Asp288 contacts Fe cation.

It belongs to the KAE1 / TsaD family. In terms of assembly, monomer. Component of the KEOPS complex that consists of Kae1, Bud32, Cgi121 and Pcc1; the whole complex dimerizes. The cofactor is Fe(2+).

The protein localises to the cytoplasm. It catalyses the reaction L-threonylcarbamoyladenylate + adenosine(37) in tRNA = N(6)-L-threonylcarbamoyladenosine(37) in tRNA + AMP + H(+). Its function is as follows. Required for the formation of a threonylcarbamoyl group on adenosine at position 37 (t(6)A37) in tRNAs that read codons beginning with adenine. Is a component of the KEOPS complex that is probably involved in the transfer of the threonylcarbamoyl moiety of threonylcarbamoyl-AMP (TC-AMP) to the N6 group of A37. Kae1 likely plays a direct catalytic role in this reaction, but requires other protein(s) of the complex to fulfill this activity. The polypeptide is tRNA N6-adenosine threonylcarbamoyltransferase (Methanococcoides burtonii (strain DSM 6242 / NBRC 107633 / OCM 468 / ACE-M)).